We begin with the raw amino-acid sequence, 379 residues long: Cytochrome b (379 aa).

A run of 4 helical transmembrane segments spans residues 33-53 (FGSL…FLAM), 77-98 (WLIR…YLHI), 113-133 (WNIG…GYVL), and 178-198 (FFTF…LHLL). 2 residues coordinate heme b: His83 and His97. Residues His182 and His196 each contribute to the heme b site. Position 201 (His201) interacts with a ubiquinone. The next 4 membrane-spanning stretches (helical) occupy residues 226–246 (YKDL…VLFS), 288–308 (LGGV…PLLH), 320–340 (FSQT…WIGG), and 347–367 (FIII…VVMP).

Belongs to the cytochrome b family. As to quaternary structure, the cytochrome bc1 complex contains 3 respiratory subunits (MT-CYB, CYC1 and UQCRFS1), 2 core proteins (UQCRC1 and UQCRC2) and probably 6 low-molecular weight proteins. Heme b serves as cofactor.

It localises to the mitochondrion inner membrane. Its function is as follows. Component of the ubiquinol-cytochrome c reductase complex (complex III or cytochrome b-c1 complex) that is part of the mitochondrial respiratory chain. The b-c1 complex mediates electron transfer from ubiquinol to cytochrome c. Contributes to the generation of a proton gradient across the mitochondrial membrane that is then used for ATP synthesis. This is Cytochrome b (MT-CYB) from Iguana iguana (Common iguana).